Reading from the N-terminus, the 555-residue chain is Benzoyl-CoA-dihydrodiol lyase (555 aa).

Belongs to the benzoyl-CoA oxygenase component C family. Homodimer.

It carries out the reaction 2,3-epoxy-2,3-dihydrobenzoyl-CoA + 2 H2O = (3Z)-6-oxohex-3-enoyl-CoA + formate + H(+). Functionally, catalyzes the ring opening of 2,3-epoxy-2,3-dihydroxybenzoyl-CoA to form 3,4-didehydroadipyl-CoA semialdehyde. The sequence is that of Benzoyl-CoA-dihydrodiol lyase (boxC) from Aromatoleum evansii (Azoarcus evansii).